We begin with the raw amino-acid sequence, 783 residues long: Putative ATP-dependent DNA helicase fml2 (783 aa).

The region spanning 118-286 (FCEQALFHNL…KVVDCLHISK (169 aa)) is the Helicase ATP-binding domain. 131–138 (LPTGLGKT) is a binding site for ATP. Positions 234–237 (DEAH) match the DEAH box motif. Positions 450–619 (KMNHLLELLK…GKKIALKKDV (170 aa)) constitute a Helicase C-terminal domain.

Belongs to the DEAD box helicase family. DEAH subfamily. FANCM sub-subfamily.

Its subcellular location is the nucleus. It is found in the nucleolus. The catalysed reaction is ATP + H2O = ADP + phosphate + H(+). This chain is Putative ATP-dependent DNA helicase fml2, found in Schizosaccharomyces pombe (strain 972 / ATCC 24843) (Fission yeast).